Here is a 319-residue protein sequence, read N- to C-terminus: Lipoyl synthase (319 aa).

Polar residues predominate over residues Met-1 to Pro-12. Residues Met-1–Pro-32 form a disordered region. [4Fe-4S] cluster is bound by residues Cys-61, Cys-66, Cys-72, Cys-87, Cys-91, Cys-94, and Ser-300. The 217-residue stretch at Trp-73–Leu-289 folds into the Radical SAM core domain.

This sequence belongs to the radical SAM superfamily. Lipoyl synthase family. [4Fe-4S] cluster is required as a cofactor.

It is found in the cytoplasm. The catalysed reaction is [[Fe-S] cluster scaffold protein carrying a second [4Fe-4S](2+) cluster] + N(6)-octanoyl-L-lysyl-[protein] + 2 oxidized [2Fe-2S]-[ferredoxin] + 2 S-adenosyl-L-methionine + 4 H(+) = [[Fe-S] cluster scaffold protein] + N(6)-[(R)-dihydrolipoyl]-L-lysyl-[protein] + 4 Fe(3+) + 2 hydrogen sulfide + 2 5'-deoxyadenosine + 2 L-methionine + 2 reduced [2Fe-2S]-[ferredoxin]. It functions in the pathway protein modification; protein lipoylation via endogenous pathway; protein N(6)-(lipoyl)lysine from octanoyl-[acyl-carrier-protein]: step 2/2. Its function is as follows. Catalyzes the radical-mediated insertion of two sulfur atoms into the C-6 and C-8 positions of the octanoyl moiety bound to the lipoyl domains of lipoate-dependent enzymes, thereby converting the octanoylated domains into lipoylated derivatives. This Bradyrhizobium sp. (strain BTAi1 / ATCC BAA-1182) protein is Lipoyl synthase.